We begin with the raw amino-acid sequence, 2206 residues long: Genome polyprotein (2206 aa).

The N-myristoyl glycine; by host moiety is linked to residue glycine 2. Over 2–1517 the chain is Cytoplasmic; the sequence is GAQVSSQKVG…NINRAMTILQ (1516 aa). 2 amphipathic alpha-helix regions span residues 579–599 and 579–603; these read GIED…LPKQ and GIED…QDSL. Active-site for protease 2A activity residues include histidine 898 and aspartate 916. Zn(2+) contacts are provided by cysteine 933 and cysteine 935. Residue cysteine 987 is the For protease 2A activity of the active site. Zn(2+)-binding residues include cysteine 993 and histidine 995. A membrane-binding region spans residues 1125-1197; sequence GDSWLKKFTE…HQSCPSQEHQ (73 aa). Positions 1125-1263 are oligomerization; that stretch reads GDSWLKKFTE…SPGTGKSVAT (139 aa). Residues 1146 to 1150 are RNA-binding; sequence SNKIS. Positions 1229–1385 constitute an SF3 helicase domain; the sequence is EHTINNYIQF…GEYSRDGKLN (157 aa). Position 1253–1260 (1253–1260) interacts with ATP; it reads GSPGTGKS. The Zn(2+) site is built by cysteine 1393, cysteine 1396, cysteine 1405, and cysteine 1410. The C4-type zinc finger occupies 1393–1410; the sequence is CKDCHQPANFKRCCPLVC. An RNA-binding region spans residues 1437-1444; it reads ERNRRSNI. The interval 1448–1453 is oligomerization; it reads MEALFQ. The stretch at 1518–1533 is an intramembrane region; sequence AVTTFAAVAGVVYVMY. Topologically, residues 1534–2206 are cytoplasmic; it reads KLFAGHQGAY…TLYRRWLDSF (673 aa). An O-(5'-phospho-RNA)-tyrosine modification is found at tyrosine 1543. The Peptidase C3 domain occupies 1563 to 1741; that stretch reads GPGFDYAVAM…FAAALKRSYF (179 aa). Active-site for protease 3C activity residues include histidine 1602, glutamate 1633, and cysteine 1709. Residues 1972-2087 enclose the RdRp catalytic domain; that stretch reads EKLFAFDYTG…SYPHEVDASL (116 aa). Mg(2+) contacts are provided by aspartate 1978 and aspartate 2073.

The protein belongs to the picornaviruses polyprotein family. As to quaternary structure, interacts with capsid protein VP1 and capsid protein VP3 to form heterotrimeric protomers. Interacts with capsid protein VP0, and capsid protein VP3 to form heterotrimeric protomers. Interacts with human PVR. Five protomers subsequently associate to form pentamers which serve as building blocks for the capsid. Interacts with capsid protein VP2, capsid protein VP3 and capsid protein VP4 following cleavage of capsid protein VP0. In terms of assembly, interacts with capsid protein VP1 and capsid protein VP3 in the mature capsid. As to quaternary structure, interacts with capsid protein VP0 and capsid protein VP1 to form heterotrimeric protomers. Five protomers subsequently associate to form pentamers which serve as building blocks for the capsid. Interacts with capsid protein VP4 in the mature capsid. Interacts with protein 2C; this interaction may be important for virion morphogenesis. Interacts with capsid protein VP1 and capsid protein VP3. In terms of assembly, homodimer. As to quaternary structure, homohexamer; forms a hexameric ring structure with 6-fold symmetry characteristic of AAA+ ATPases. Interacts (via N-terminus) with host RTN3 (via reticulon domain); this interaction is important for viral replication. Interacts with capsid protein VP3; this interaction may be important for virion morphogenesis. Interacts with protein 3CD. In terms of assembly, homodimer. Interacts with host GBF1. Interacts (via GOLD domain) with host ACBD3 (via GOLD domain); this interaction allows the formation of a viral protein 3A/ACBD3 heterotetramer with a 2:2 stoichiometry, which will stimulate the recruitment of host PI4KB in order to synthesize PI4P at the viral RNA replication sites. As to quaternary structure, interacts with RNA-directed RNA polymerase. Interacts with protein 3AB and with RNA-directed RNA polymerase. In terms of assembly, interacts with Viral protein genome-linked and with protein 3CD. Mg(2+) serves as cofactor. Post-translationally, specific enzymatic cleavages in vivo by the viral proteases yield processing intermediates and the mature proteins. In terms of processing, myristoylation is required for the formation of pentamers during virus assembly. Further assembly of 12 pentamers and a molecule of genomic RNA generates the provirion. During virion maturation, immature virions are rendered infectious following cleavage of VP0 into VP4 and VP2. This maturation seems to be an autocatalytic event triggered by the presence of RNA in the capsid and it is followed by a conformational change infectious virion. Post-translationally, myristoylation is required during RNA encapsidation and formation of the mature virus particle. In terms of processing, VPg is uridylylated by the polymerase into VPg-pUpU. This acts as a nucleotide-peptide primer for the genomic RNA replication.

It is found in the virion. The protein localises to the host cytoplasm. Its subcellular location is the host cytoplasmic vesicle membrane. It localises to the host nucleus. The enzyme catalyses a ribonucleoside 5'-triphosphate + H2O = a ribonucleoside 5'-diphosphate + phosphate + H(+). The catalysed reaction is Selective cleavage of Tyr-|-Gly bond in the picornavirus polyprotein.. It carries out the reaction RNA(n) + a ribonucleoside 5'-triphosphate = RNA(n+1) + diphosphate. It catalyses the reaction Selective cleavage of Gln-|-Gly bond in the poliovirus polyprotein. In other picornavirus reactions Glu may be substituted for Gln, and Ser or Thr for Gly.. Its activity is regulated as follows. Replication or transcription is subject to high level of random mutations by the nucleotide analog ribavirin. In terms of biological role, forms an icosahedral capsid of pseudo T=3 symmetry with capsid proteins VP2 and VP3. The capsid is 300 Angstroms in diameter, composed of 60 copies of each capsid protein and enclosing the viral positive strand RNA genome. Capsid protein VP1 mainly forms the vertices of the capsid. Capsid protein VP1 interacts with host cell receptor PVR to provide virion attachment to target host cells. This attachment induces virion internalization predominantly through clathrin- and caveolin-independent endocytosis in Hela cells and through caveolin-mediated endocytosis in brain microvascular endothelial cells. Tyrosine kinases are probably involved in the entry process. Virus binding to PVR induces increased junctional permeability and rearrangement of junctional proteins. Modulation of endothelial tight junctions, as well as cytolytic infection of endothelial cells themselves, may result in loss of endothelial integrity which may help the virus to reach the CNS. After binding to its receptor, the capsid undergoes conformational changes. Capsid protein VP1 N-terminus (that contains an amphipathic alpha-helix) and capsid protein VP4 are externalized. Together, they shape a pore in the host membrane through which viral genome is translocated to host cell cytoplasm. Its function is as follows. Forms an icosahedral capsid of pseudo T=3 symmetry with capsid proteins VP2 and VP3. The capsid is 300 Angstroms in diameter, composed of 60 copies of each capsid protein and enclosing the viral positive strand RNA genome. Functionally, lies on the inner surface of the capsid shell. After binding to the host receptor, the capsid undergoes conformational changes. Capsid protein VP4 is released, Capsid protein VP1 N-terminus is externalized, and together, they shape a pore in the host membrane through which the viral genome is translocated into the host cell cytoplasm. Component of immature procapsids, which is cleaved into capsid proteins VP4 and VP2 after maturation. Allows the capsid to remain inactive before the maturation step. In terms of biological role, cysteine protease that cleaves viral polyprotein and specific host proteins. It is responsible for the autocatalytic cleavage between the P1 and P2 regions, which is the first cleavage occurring in the polyprotein. Also cleaves the host translation initiation factor EIF4G1, in order to shut down the capped cellular mRNA translation. Inhibits the host nucleus-cytoplasm protein and RNA trafficking by cleaving host members of the nuclear pores including NUP98, NUP62 and NUP153. Counteracts stress granule formation probably by antagonizing its assembly or promoting its dissassembly. Cleaves and inhibits host IFIH1/MDA5, thereby inhibiting the type-I IFN production and the establishment of the antiviral state. Cleaves and inhibits host MAVS, thereby inhibiting the type-I IFN production and the establishment of the antiviral state. Its function is as follows. Plays an essential role in the virus replication cycle by acting as a viroporin. Creates a pore in the host endoplasmic reticulum and as a consequence releases Ca2+ in the cytoplasm of infected cell. In turn, high levels of cytoplasmic calcium may trigger membrane trafficking and transport of viral ER-associated proteins to viroplasms, sites of viral genome replication. Functionally, induces and associates with structural rearrangements of intracellular membranes. Displays RNA-binding, nucleotide binding and NTPase activities. May play a role in virion morphogenesis and viral RNA encapsidation by interacting with the capsid protein VP3. Localizes the viral replication complex to the surface of membranous vesicles. Together with protein 3CD binds the Cis-Active RNA Element (CRE) which is involved in RNA synthesis initiation. Acts as a cofactor to stimulate the activity of 3D polymerase, maybe through a nucleid acid chaperone activity. In terms of biological role, localizes the viral replication complex to the surface of membranous vesicles. It inhibits host cell endoplasmic reticulum-to-Golgi apparatus transport and causes the disassembly of the Golgi complex, possibly through GBF1 interaction. This would result in depletion of MHC, trail receptors and IFN receptors at the host cell surface. Plays an essential role in viral RNA replication by recruiting ACBD3 and PI4KB at the viral replication sites, thereby allowing the formation of the rearranged membranous structures where viral replication takes place. Its function is as follows. Acts as a primer for viral RNA replication and remains covalently bound to viral genomic RNA. VPg is uridylylated prior to priming replication into VPg-pUpU. The oriI viral genomic sequence may act as a template for this. The VPg-pUpU is then used as primer on the genomic RNA poly(A) by the RNA-dependent RNA polymerase to replicate the viral genome. During genome replication, the VPg-RNA linkage is removed by the host TDP2, thereby accelerating replication. During the late stage of the replication cycle, host TDP2 is excluded from sites of viral RNA synthesis and encapsidation, allowing for the generation of progeny virions. Functionally, involved in the viral replication complex and viral polypeptide maturation. It exhibits protease activity with a specificity and catalytic efficiency that is different from protease 3C. Protein 3CD lacks polymerase activity. Protein 3CD binds to the 5'UTR of the viral genome. Major viral protease that mediates proteolytic processing of the polyprotein. Cleaves host EIF5B, contributing to host translation shutoff. Also cleaves host PABPC1, contributing to host translation shutoff. Cleaves host RIGI and thus contributes to the inhibition of type I interferon production. Cleaves host NLRP1, triggers host N-glycine-mediated degradation of the autoinhibitory NLRP1 N-terminal fragment. Inhibits the integrated stress response (ISR) in the infected cell by cleaving host G3BP1. Stress granule formation is thus inhibited, which allows protein synthesis and viral replication. In terms of biological role, replicates the viral genomic RNA on the surface of intracellular membranes. May form linear arrays of subunits that propagate along a strong head-to-tail interaction called interface-I. Covalently attaches UMP to a tyrosine of VPg, which is used to prime RNA synthesis. The positive stranded RNA genome is first replicated at virus induced membranous vesicles, creating a dsRNA genomic replication form. This dsRNA is then used as template to synthesize positive stranded RNA genomes. ss(+)RNA genomes are either translated, replicated or encapsidated. In Poliovirus type 3 (strains P3/Leon/37 and P3/Leon 12A[1]B), this protein is Genome polyprotein.